The following is a 303-amino-acid chain: Aspartate carbamoyltransferase catalytic subunit (303 aa).

Arg51 and Thr52 together coordinate carbamoyl phosphate. Position 80 (Lys80) interacts with L-aspartate. The carbamoyl phosphate site is built by Arg101, His129, and Gln132. Residues Arg162 and Arg221 each contribute to the L-aspartate site. Residues Leu260 and Pro261 each contribute to the carbamoyl phosphate site.

Belongs to the aspartate/ornithine carbamoyltransferase superfamily. ATCase family. Heterooligomer of catalytic and regulatory chains.

The catalysed reaction is carbamoyl phosphate + L-aspartate = N-carbamoyl-L-aspartate + phosphate + H(+). Its pathway is pyrimidine metabolism; UMP biosynthesis via de novo pathway; (S)-dihydroorotate from bicarbonate: step 2/3. Functionally, catalyzes the condensation of carbamoyl phosphate and aspartate to form carbamoyl aspartate and inorganic phosphate, the committed step in the de novo pyrimidine nucleotide biosynthesis pathway. The sequence is that of Aspartate carbamoyltransferase catalytic subunit from Saccharolobus islandicus (strain M.14.25 / Kamchatka #1) (Sulfolobus islandicus).